We begin with the raw amino-acid sequence, 732 residues long: Phosphoribosylformylglycinamidine synthase subunit PurL (732 aa).

His-42 is an active-site residue. ATP is bound by residues Tyr-45 and Lys-84. Glu-86 is a Mg(2+) binding site. Substrate is bound by residues 87–90 and Arg-109; that span reads SHNH. The Proton acceptor role is filled by His-88. Asp-110 contacts Mg(2+). Substrate is bound at residue Gln-238. Asp-266 lines the Mg(2+) pocket. 310-312 contributes to the substrate binding site; the sequence is ESQ. ATP-binding residues include Asp-496 and Gly-533. Asn-534 is a Mg(2+) binding site. Ser-536 is a substrate binding site.

This sequence belongs to the FGAMS family. Monomer. Part of the FGAM synthase complex composed of 1 PurL, 1 PurQ and 2 PurS subunits.

The protein resides in the cytoplasm. It carries out the reaction N(2)-formyl-N(1)-(5-phospho-beta-D-ribosyl)glycinamide + L-glutamine + ATP + H2O = 2-formamido-N(1)-(5-O-phospho-beta-D-ribosyl)acetamidine + L-glutamate + ADP + phosphate + H(+). It functions in the pathway purine metabolism; IMP biosynthesis via de novo pathway; 5-amino-1-(5-phospho-D-ribosyl)imidazole from N(2)-formyl-N(1)-(5-phospho-D-ribosyl)glycinamide: step 1/2. Functionally, part of the phosphoribosylformylglycinamidine synthase complex involved in the purines biosynthetic pathway. Catalyzes the ATP-dependent conversion of formylglycinamide ribonucleotide (FGAR) and glutamine to yield formylglycinamidine ribonucleotide (FGAM) and glutamate. The FGAM synthase complex is composed of three subunits. PurQ produces an ammonia molecule by converting glutamine to glutamate. PurL transfers the ammonia molecule to FGAR to form FGAM in an ATP-dependent manner. PurS interacts with PurQ and PurL and is thought to assist in the transfer of the ammonia molecule from PurQ to PurL. The chain is Phosphoribosylformylglycinamidine synthase subunit PurL from Campylobacter hominis (strain ATCC BAA-381 / DSM 21671 / CCUG 45161 / LMG 19568 / NCTC 13146 / CH001A).